The sequence spans 372 residues: MVKFNNIIYDPQVSDKKFPVQASDPEREAKLVVLQPVGYPFVCNLMEAPRIDAVNKELFEIYARDQWEGFRAAEGSYLFDQKLLPDYAFKIIRAHPDGSKITRNTSIILLENDREEFHEVRSSITMDDVIGQEDAKIKCRIIMKYLEDPDRFRDWAPRNVLFHGSPGTGKTMLAKSLANELKVPLYLIKATSLIGEHVGDGARQIHELYELASKTAPSVIFIDEMDAIGLDRRYQSLRGDVSEVVNALLTEMDGINQNWGVVTIGATNNPELLDKAIRSRFEEEIEFKLPDDEERKLMLEKYIETMPLKVDFPVDKLVKLTREMSGRDIKDRVLKTALHRAIAEDSESVRAEHIEYALKERKVSGEPKHMFA.

164 to 171 (GSPGTGKT) contributes to the ATP binding site.

This sequence belongs to the AAA ATPase family.

In terms of biological role, the 26S proteasome is involved in the ATP-dependent degradation of ubiquitinated proteins. The regulatory (or ATPase) complex confers ATP dependency and substrate specificity to the 26S complex. The protein is Putative 26S proteasome regulatory subunit homolog MTH_1011 of Methanothermobacter thermautotrophicus (strain ATCC 29096 / DSM 1053 / JCM 10044 / NBRC 100330 / Delta H) (Methanobacterium thermoautotrophicum).